The chain runs to 677 residues: Methionine--tRNA ligase (677 aa).

Residues 15–25 (PYANGSIHLGH) carry the 'HIGH' region motif. The Zn(2+) site is built by Cys-146, Cys-149, Cys-159, and Cys-162. The 'KMSKS' region signature appears at 333–337 (KMSKS). Position 336 (Lys-336) interacts with ATP. The 103-residue stretch at 575–677 (DFAKVDLRVA…AGAKPGHQVK (103 aa)) folds into the tRNA-binding domain.

It belongs to the class-I aminoacyl-tRNA synthetase family. MetG type 1 subfamily. Homodimer. Zn(2+) serves as cofactor.

The protein resides in the cytoplasm. The catalysed reaction is tRNA(Met) + L-methionine + ATP = L-methionyl-tRNA(Met) + AMP + diphosphate. Functionally, is required not only for elongation of protein synthesis but also for the initiation of all mRNA translation through initiator tRNA(fMet) aminoacylation. This Escherichia coli O81 (strain ED1a) protein is Methionine--tRNA ligase.